A 300-amino-acid chain; its full sequence is Probable acetyltransferase Rv3034c (300 aa).

Positions 1 to 25 (MNVLSLGSSSGVVWGRVPITAPAGA) are cleaved as a signal peptide.

This sequence belongs to the transferase hexapeptide repeat family.

In terms of biological role, may be involved in the biosynthesis of 6-O-methylglucosyl-containing lipopolysaccharides (MGLP). Its function is as follows. Regulates host peroxisome homeostasis in response to intracellular redox levels to favor mycobacterial infection in macrophage. Induces the expression of host peroxisome biogenesis and proliferation factors as well as peroxisome associated enzymes. Inhibits the induction of host pexophagy mechanism by down-regulating the expression of pexophagy associated proteins and adapter molecules in infected macrophages. However, during increased oxidative stress conditions, it induces degradation of dysfunctional and damaged peroxisomes. Regulation of peroxisome biogenesis and degradation is dependent upon host p-mTORC1 mediated signaling pathway. This chain is Probable acetyltransferase Rv3034c, found in Mycobacterium tuberculosis (strain ATCC 25618 / H37Rv).